A 1213-amino-acid polypeptide reads, in one-letter code: Probable ATP-binding protein BrxC (1213 aa).

Belongs to the BrxC family.

In terms of biological role, BREX systems (bacteriophage exclusion) provide immunity against bacteriophage. Part of a type 1 BREX system which protects against dsDNA phage. This system allows phage adsorption but prevents phage DNA replication, without degradation of the phage DNA. Methylation of bacterial DNA by PglX guides self/non-self discrimination. When the brxA-brxB-brxC-pglX-pglZ-brxL genes are transformed into a susceptible E.coli strain (BW25113) they confer very high resistance to infection by bacteriophage VR7 and VpaE1, about 100-fold protection against lambda, T5 and T7 and no protection against RNA phage Qbeta, ssDNA phage M13 or dSDNA phage T4 and VR5. Glycosylated phage DNA is not susceptible to BREX. The BREX system does not confer resistance to lysogenic lambda phage, i.e. prophage that are integrated into the chromosomal DNA and then induced to form phage. The chain is Probable ATP-binding protein BrxC from Escherichia coli O9:H4 (strain HS).